The chain runs to 863 residues: Glycerol-3-phosphate acyltransferase (863 aa).

Residues 1 to 29 (MPKKNSPLLPKETTTTQSSVDTSGSSNLT) are disordered. A compositionally biased stretch (polar residues) spans 12–29 (ETTTTQSSVDTSGSSNLT). An HXXXXD motif motif is present at residues 343-348 (SHRSHI).

The protein belongs to the GPAT/DAPAT family.

It localises to the cell inner membrane. It catalyses the reaction sn-glycerol 3-phosphate + an acyl-CoA = a 1-acyl-sn-glycero-3-phosphate + CoA. It functions in the pathway phospholipid metabolism; CDP-diacylglycerol biosynthesis; CDP-diacylglycerol from sn-glycerol 3-phosphate: step 1/3. The chain is Glycerol-3-phosphate acyltransferase from Xylella fastidiosa (strain M12).